The primary structure comprises 179 residues: Stress response regulator gls24 homolog (179 aa).

Residues 147–179 (TSEFTSHQVENVKASVDNGVEKLQDQKAEPRVK) form a disordered region. The segment covering 165 to 179 (GVEKLQDQKAEPRVK) has biased composition (basic and acidic residues).

Belongs to the asp23 family.

The chain is Stress response regulator gls24 homolog from Streptococcus pyogenes serotype M28 (strain MGAS6180).